A 329-amino-acid chain; its full sequence is Eukaryotic translation initiation factor 2 subunit 1 (329 aa).

An S1 motif domain is found at D24 to R95. S59 is subject to Phosphoserine; by eIK1, eIK2 and PK4. Residues L291 to D329 are disordered. A compositionally biased stretch (acidic residues) spans S298–D329.

The protein belongs to the eIF-2-alpha family. In terms of processing, phosphorylated at Ser-59 by eIK1 in response to amino acid starvation. Phosphorylates at Ser-59 in schizonts and gametocytes but not in rings and young trophozoites. Phosphorylates at Ser-59 by eIK2 in salivary gland sporozoites but not in midgut and hemocoel sporozoites. Dephosphorylated at Ser-59 by UIS2. Phosphorylation of eIF2alpha subunit of the pre-initiation complex eIF2 inhibits recycling of inactive eIF2-GDP to active eIF2-GTP by limiting the activity of the guanine nucleotide exchange factor eIF2B and thus, inhibits protein translation.

The protein resides in the cytoplasm. It localises to the stress granule. Its function is as follows. Functions in the early steps of protein synthesis by forming a ternary complex with GTP and initiator tRNA. May regulate protein translation in response to amino acid starvation. May regulate protein at various stages of parasite development. In Plasmodium falciparum (isolate 3D7), this protein is Eukaryotic translation initiation factor 2 subunit 1.